The primary structure comprises 440 residues: Thymidine phosphorylase (440 aa).

It belongs to the thymidine/pyrimidine-nucleoside phosphorylase family. As to quaternary structure, homodimer.

The catalysed reaction is thymidine + phosphate = 2-deoxy-alpha-D-ribose 1-phosphate + thymine. It functions in the pathway pyrimidine metabolism; dTMP biosynthesis via salvage pathway; dTMP from thymine: step 1/2. Functionally, the enzymes which catalyze the reversible phosphorolysis of pyrimidine nucleosides are involved in the degradation of these compounds and in their utilization as carbon and energy sources, or in the rescue of pyrimidine bases for nucleotide synthesis. In Escherichia coli (strain K12 / DH10B), this protein is Thymidine phosphorylase.